A 77-amino-acid polypeptide reads, in one-letter code: DNA-directed RNA polymerase subunit epsilon (77 aa).

The protein belongs to the RNA polymerase subunit epsilon family. As to quaternary structure, RNAP is composed of a core of 2 alpha, a beta and a beta' subunit. The core is associated with a delta subunit, and at least one of epsilon or omega. When a sigma factor is associated with the core the holoenzyme is formed, which can initiate transcription.

The catalysed reaction is RNA(n) + a ribonucleoside 5'-triphosphate = RNA(n+1) + diphosphate. In terms of biological role, a non-essential component of RNA polymerase (RNAP). This is DNA-directed RNA polymerase subunit epsilon from Streptococcus pneumoniae (strain Hungary19A-6).